The chain runs to 543 residues: Plant intracellular Ras-group-related LRR protein 5 (543 aa).

LRR repeat units follow at residues 239–262 (LQDVTELDLSENRIMALPSTIGSL), 264–284 (YLTKLDLHSNQLINLPDAFGE), 285–307 (LSNLIDLDLHANQLKSLPSSFGN), 309–331 (TSLANLDLSSNMLKALPDCLGKL), 332–354 (ANLRRLIVETNELEELPYTIGSC), 356–377 (SLVELRLDFNQLKALPEAIGKL), 378–400 (EKLEILTLHYNRIKGLPTTVGSL), 402–424 (RLRELDVSFNEVEVIPENICFAT), 426–448 (LVKLNLSRNFADLRALPKSIGNL), and 449–470 (EMLEELDISSNQIRVLPDSFRC). The LRR 11; degenerate repeat unit spans residues 472-494 (SRLRVFHADETPLEFPPREVVKL). A GVYW; degenerate motif is present at residues 495–502 (GAQAVVKY).

The protein belongs to the SHOC2 family. In terms of tissue distribution, widely expressed.

Its function is as follows. Leucine-rich repeat protein that likely mediates protein interactions, possibly in the context of signal transduction. This chain is Plant intracellular Ras-group-related LRR protein 5 (IRL5), found in Oryza sativa subsp. japonica (Rice).